We begin with the raw amino-acid sequence, 209 residues long: High frequency lysogenization protein HflD homolog (209 aa).

A coiled-coil region spans residues 95 to 132; that stretch reads LERKLAASKGAMNTLGNRIADLSRQLEHFELESDTLMS.

Belongs to the HflD family.

The protein resides in the cytoplasm. It is found in the cell inner membrane. This chain is High frequency lysogenization protein HflD homolog, found in Cronobacter sakazakii (strain ATCC BAA-894) (Enterobacter sakazakii).